Here is a 362-residue protein sequence, read N- to C-terminus: 2-oxoglutarate-dependent dioxygenase lolO1 (362 aa).

Residues 199 to 312 enclose the Fe2OG dioxygenase domain; that stretch reads TWNYFLGQPV…RYSLVFFGHL (114 aa). Positions 222, 224, and 280 each coordinate Fe cation. Arg-303 lines the 2-oxoglutarate pocket.

This sequence belongs to the iron/ascorbate-dependent oxidoreductase family. Requires Fe(2+) as cofactor.

It functions in the pathway alkaloid biosynthesis. Functionally, 2-oxoglutarate-dependent dioxygenase; part of the gene cluster that mediates the biosynthesis of loline alkaloids, potent insecticidal agents composed of a pyrrolizidine ring system and an uncommon ether bridge linking carbons 2 and 7. Lolines are structurally differentiated by the various modifications of the L-amino group and include norloline, loline, N-methylloline, N-acetylloline, N-acetylnorloline, and N-formylloline. The first committed step is the condensation of O-acetyl-L-homoserine (derived from L-aspartic acid) and L-proline, probably catalyzed by the gamma-type pyridoxal 5'-phosphate(PLP)-dependent enzyme lolC, to give the diamino diacid, NACPP. Ensuing cyclization, decarboxylation, and acetylation steps yield 1-exo-acetamidopyrrolizidine (AcAP). LolO is required for installation of the ether bridge upon the pathway intermediate, 1-exo-acetamidopyrrolizidine (AcAP). In sequential 2-oxoglutarate- and O(2)-consuming steps, lolO removes hydrogens from C2 and C7 of AcAP to form both carbon-oxygen bonds in N-acetylnorloline (NANL), the precursor to all other lolines. The enzymes lolD, lolE, lolF and lolT have also been proposed to be involved in the ether-bridge installation. Further processing of the exocyclic moiety of NANL by fungal N-acetamidase (LolN), methyltransferase (LolM), and cytochrome P450 (LolP) enzymes, with occasional involvement of a plant acetyltransferase, generates the other known lolines. LolN transforms NANL to norlonine which is monomethylated and dimethylated to respectively lonine and N-methyllonine (NML) by lolM. LolP catalyzes hydroxylation of the methyl group in N-methylloline (NML) and further oxygenation to N-formylloline (NFL). A plant acetyltransferase is responsible for the acetylation of loline to form N-acetylloline (NAL). LolA might interact with aspartate kinase to prevent feedback inhibition of its activity by these end products and thereby promote production of l-homoserine from l-aspartate. The chain is 2-oxoglutarate-dependent dioxygenase lolO1 from Epichloe uncinata (Endophyte fungus).